The following is a 568-amino-acid chain: Protein yellow (568 aa).

Residues 1–28 form the signal peptide; the sequence is MHAQDKGGVLPGLSLLLIAVAMVCPSQA. Asparagine 151 and asparagine 222 each carry an N-linked (GlcNAc...) asparagine glycan.

This sequence belongs to the major royal jelly protein family.

The protein resides in the secreted. Its function is as follows. Controls the pigmentation pattern of the adult cuticle and larval mouth parts. In Drosophila guanche (Fruit fly), this protein is Protein yellow (y).